We begin with the raw amino-acid sequence, 413 residues long: Cardiolipin synthase B (413 aa).

2 PLD phosphodiesterase domains span residues 108 to 135 (VFRRMHRKIVVIDARIAFIGGLNYSAEH) and 285 to 312 (RRRPLHGKVALMDDHWATVGSSNLDPLS). Residues histidine 113, lysine 115, aspartate 120, histidine 290, lysine 292, and aspartate 297 contribute to the active site. Residues 390–413 (VGPPAQPTMETQDRVETENTGVKP) form a disordered region.

Belongs to the phospholipase D family. Cardiolipin synthase subfamily. ClsB sub-subfamily.

It is found in the cell membrane. It catalyses the reaction 2 a 1,2-diacyl-sn-glycero-3-phospho-(1'-sn-glycerol) = a cardiolipin + glycerol. In terms of biological role, catalyzes the phosphatidyl group transfer from one phosphatidylglycerol molecule to another to form cardiolipin (CL) (diphosphatidylglycerol) and glycerol. The polypeptide is Cardiolipin synthase B (Escherichia coli O6:H1 (strain CFT073 / ATCC 700928 / UPEC)).